Here is a 1163-residue protein sequence, read N- to C-terminus: E3 ubiquitin-protein ligase TRIM33 (1163 aa).

The interval M1–P119 is disordered. The segment covering T27–S38 has biased composition (basic and acidic residues). The segment covering T45 to S54 has biased composition (low complexity). Pro residues predominate over residues D72–T87. Positions P88–A99 are enriched in low complexity. The RING-type zinc finger occupies C129 to H188. The B box-type 1; atypical zinc-finger motif lies at N215–E268. Zn(2+) is bound by residues C220, C223, C244, H257, C280, H283, C303, and H308. The B box-type 2 zinc-finger motif lies at Q275–L316. The stretch at A345–A369 forms a coiled coil. The segment covering M524–H533 has biased composition (low complexity). 5 disordered regions span residues M524–Q555, Q575–Q599, L656–P706, T753–I848, and N867–D918. Residues Q534–Q548 show a composition bias toward basic residues. Polar residues predominate over residues M580–P590. 2 stretches are compositionally biased toward low complexity: residues S678–A691 and T753–T797. A compositionally biased stretch (basic and acidic residues) spans K821–R830. Residues S870 to L889 show a composition bias toward polar residues. The PHD-type zinc-finger motif lies at E921–L968. Residues A991–I1114 form the Bromo domain. Residues T1128–P1147 are disordered. The span at E1133–I1144 shows a compositional bias: acidic residues.

It is found in the nucleus. It catalyses the reaction S-ubiquitinyl-[E2 ubiquitin-conjugating enzyme]-L-cysteine + [acceptor protein]-L-lysine = [E2 ubiquitin-conjugating enzyme]-L-cysteine + N(6)-ubiquitinyl-[acceptor protein]-L-lysine.. The protein operates within protein modification; protein ubiquitination. Its function is as follows. May act as an E3 ubiquitin-protein ligase and a transcriptional repressor. Involved in the regulation of embryonic and adult hematopoiesis. Required for normal development and survival of both committed erythroid progenitor cells and posterior mesenchymal cells. This is E3 ubiquitin-protein ligase TRIM33 (trim33) from Danio rerio (Zebrafish).